The primary structure comprises 2442 residues: MTVPPLLKSCVVKLLLPAALLAAAIIRPSFLSIGYVLLALVSAVLPPIRKSLALPKLVGTFVIITFLFCLAVALGVGSYQISEQVVHKNDRTYICNRSDTTLFRSIGLVRFHPTGTFESTRAFLPEIIATSAALLTIIIVMFLSHRDEQLDVVGDVVTVRSESGREQRRQRKLAAIMWSAIGNSLRRLTNFVLFLFTAYVGIVKPSLSNSIYFLAFLFISTWWSTYTPLRHGVYNQIKKFLIFYSALHFLVLYTYQIPIVHHSWLPTGSFLPRLFGLTVLMDSSCPEWWKFPFVAPDFNDDDLIMKWPLYANPIVVLVFFYLTVAQYKFTRNGSREYIDDNEYGSSVHEERFVSAGTVETNVDDVGQLISISESTASAPSGRGRGNTLLLSNASSSANDDEQGRARSRSPLRNGEEQGSIPLRKVTSQVVDRNKLSNIFNTTAPGDKESAASKGMIAVMTFVIFHSYSIALTAMMTWALLYHSIFGLILLILTCILWIFRDTRKSSFAMAPIILMYIEFLLILQYFLSMDIHAEIGDPAWMNFVGIEWTTLPVHAVIILCVQTLLTLPVFLLLRLARREKFYESLSDYERQRRINSYGTFGASKTGAGGVAVAKFQDPKSRKFAAFVEYLSNKVSVYFIFVVSVVLLVVSTCFAPNFYNILFFALWALNLIYLKFSFRLYRGLAYAFWLTLTFYTSIVIIALYIYQFPGVSQWIIRNTSLSQEWLNAIGLVDFRAIGESGALFLQLLAPIALFVVTMLQLKFFHGPWSRATSPRRAENDPPTSTTEAAAVASTSGTQGRAHAAGDTLVKKLHKLANQTIELLWRFFEVHISKIVFVIIAIFIANNINALYIPLVILLSLAICLPSAADGIFSLFMCAYLFLVALSKMIYQLDIVPELSQIDRGVGADNCSHGNISMPEWFGLKKEVEGTEPIYMLFGVIVSIIALAFQSIVIYRQRHYRASLGLPESMRAKVFPDFHHSHFDRSLKNAIQFLIDYGFYKFGLEITMIAIGIDIFNRMDALAAIQCFWLVLFALNKRVFVRRIWVFYVIYMAILYPLQFFSYVGLPPDSCIEYPWSYWIPSYSDDARFNLSYLLNLSIYGVNWPSAYLIGDFFVLLLASCQLAVFRREGEDNDSIYNDGNFVIKPENPQYDFIDTKKSYVDYFKSFVFHYGHWITLMSTLAAGIAGTSLFALGYIIFTLTMLWSGNNLYVMNSTLRSFEHTLKRWNALLGYTLFTITMKVCLQIFGCVFLSWFDQSGGWGKTLCIVRQLFSITCVNNECHVLKELEDFSKACAVETKEGNIGFDVIALSFLVFQIRIFHSWYFQHCMVEYRSEVILANRGAVLKNQLIEKEMKEQNEQQKAKFNDIRRRTEAIRERYQKQIERGAAERDFEPVTYGHAKRAGDYYMFKYDPENDDLVEPVDSFVPEVDPKATAYDRLDPGQIMYAATAHDLDLAKTVQQVKKGDTIKDPDSRALIAVSEPEARKPGGTEETDGDEDEDNKDSKVESTAKFIQKMIASALDLCSVTLNKLCREHRYVGFVLSKEKQKLKSGHSESLSNTSRKLTDIRSAVDLPSLQLVQSANDVEKMETAVSVDWQQKSSATRLLNAVVNCIGAHTDILCYFFAIMTQVMTGGLITLPLPLMSLFWGNLSNPRPSKFFWVTMITYTECVIVIKFVCQFAFMPYNSITWRTEHQMDPMSLDKLFGVSQRDSFALWDIVLLFSLFFHRYMLRKLGLWKDANLTDTFTLKEEPRSASGSDTGSPKKIAQEPKVVVTQSDTLEGTSGGEIVIPSDPNAVSNMEELDCEPPIPEKQSGPIGRFIHQLFHPKFRYIRDLYPIMFGIDVICFLIMTFGYSAFGEGGSGNVLDDVKASRIPVTLVVMLVGMTLAIIIDRALYLRKSVVGKLIYQVLMIAFLHIWVFLVLPNMTRRSAISNHVAQALYVIKSCYFLVSAWQIRNGYPELCIGNLLTHSYGMTNMIAFKVFMNIPFLFELRTAIDWTWTDTSMPLFDFFNMENFYAHIFNIKCARQFEAAYPAPRGIPKGKLVKYMMGFPIIIGVVIFIFSPLLLWSLLNQIGTISMPEKVTLRISIEGYPPLYEMEAQGSNHDNAELGMIKPDQLASLNQALTDSYTTRDTNSILRSRMSVSYLKGYTYEDILIVRFRPESEIYWPISQDSRNAMIDKLSRNTSVNFEVSLEFTRPYDPNENAALKHSKSWLVPISLDMTIRAKIQSALRGDPGHPILIPQSIPAFIQVPNQGELTLPTSIGNTIINDGNPRINTTGMEKSDEARAWFDSLTLNLEQGKSQNEKMWIATSEHPGDQNAKLWIKTANTTYSGRPYLQVVGFIDRAFPSFLAKVFKGGVIAVYLSVILVVGRGLVRGIFTTSPSTVMFTELPNADHLLKICLDIYLVREAKDFMLEQDLFAKLIFLFRSPATLIEWTRMSKKKQE.

The Extracellular segment spans residues 1–5 (MTVPP). A helical membrane pass occupies residues 6–26 (LLKSCVVKLLLPAALLAAAII). Arg27 is a topological domain (cytoplasmic). A helical transmembrane segment spans residues 28–48 (PSFLSIGYVLLALVSAVLPPI). The Extracellular portion of the chain corresponds to 49–56 (RKSLALPK). A helical membrane pass occupies residues 57-77 (LVGTFVIITFLFCLAVALGVG). Over 78–122 (SYQISEQVVHKNDRTYICNRSDTTLFRSIGLVRFHPTGTFESTRA) the chain is Cytoplasmic. The chain crosses the membrane as a helical span at residues 123 to 143 (FLPEIIATSAALLTIIIVMFL). At 144-173 (SHRDEQLDVVGDVVTVRSESGREQRRQRKL) the chain is on the extracellular side. A helical transmembrane segment spans residues 174–196 (AAIMWSAIGNSLRRLTNFVLFLF). Topologically, residues 197–198 (TA) are cytoplasmic. The chain crosses the membrane as a helical span at residues 199 to 219 (YVGIVKPSLSNSIYFLAFLFI). Topologically, residues 220–239 (STWWSTYTPLRHGVYNQIKK) are extracellular. Residues 240–260 (FLIFYSALHFLVLYTYQIPIV) traverse the membrane as a helical segment. Residues 261–303 (HHSWLPTGSFLPRLFGLTVLMDSSCPEWWKFPFVAPDFNDDDL) are Cytoplasmic-facing. A helical membrane pass occupies residues 304–324 (IMKWPLYANPIVVLVFFYLTV). Over 325–454 (AQYKFTRNGS…GDKESAASKG (130 aa)) the chain is Extracellular. 3 N-linked (GlcNAc...) asparagine glycosylation sites follow: Asn332, Asn392, and Asn440. The interval 389–417 (LLSNASSSANDDEQGRARSRSPLRNGEEQ) is disordered. The helical transmembrane segment at 455–475 (MIAVMTFVIFHSYSIALTAMM) threads the bilayer. At 476–478 (TWA) the chain is on the cytoplasmic side. A helical transmembrane segment spans residues 479 to 499 (LLYHSIFGLILLILTCILWIF). At 500–506 (RDTRKSS) the chain is on the extracellular side. Residues 507 to 527 (FAMAPIILMYIEFLLILQYFL) form a helical membrane-spanning segment. The Cytoplasmic portion of the chain corresponds to 528–552 (SMDIHAEIGDPAWMNFVGIEWTTLP). A helical membrane pass occupies residues 553–573 (VHAVIILCVQTLLTLPVFLLL). The Extracellular segment spans residues 574 to 633 (RLARREKFYESLSDYERQRRINSYGTFGASKTGAGGVAVAKFQDPKSRKFAAFVEYLSNK). A helical transmembrane segment spans residues 634–654 (VSVYFIFVVSVVLLVVSTCFA). Over 655 to 656 (PN) the chain is Cytoplasmic. The chain crosses the membrane as a helical span at residues 657–677 (FYNILFFALWALNLIYLKFSF). Residues 678 to 683 (RLYRGL) lie on the Extracellular side of the membrane. A helical membrane pass occupies residues 684-704 (AYAFWLTLTFYTSIVIIALYI). Over 705-739 (YQFPGVSQWIIRNTSLSQEWLNAIGLVDFRAIGES) the chain is Cytoplasmic. Residues 740 to 760 (GALFLQLLAPIALFVVTMLQL) traverse the membrane as a helical segment. The Extracellular portion of the chain corresponds to 761–832 (KFFHGPWSRA…WRFFEVHISK (72 aa)). A disordered region spans residues 768–798 (SRATSPRRAENDPPTSTTEAAAVASTSGTQG). Positions 782 to 794 (TSTTEAAAVASTS) are enriched in low complexity. A glycan (N-linked (GlcNAc...) asparagine) is linked at Asn816. A helical membrane pass occupies residues 833–853 (IVFVIIAIFIANNINALYIPL). The Cytoplasmic segment spans residues 854–874 (VILLSLAICLPSAADGIFSLF). A helical membrane pass occupies residues 875 to 895 (MCAYLFLVALSKMIYQLDIVP). The Extracellular segment spans residues 896–931 (ELSQIDRGVGADNCSHGNISMPEWFGLKKEVEGTEP). N-linked (GlcNAc...) asparagine glycosylation is found at Asn908 and Asn913. Residues 932–952 (IYMLFGVIVSIIALAFQSIVI) traverse the membrane as a helical segment. The Cytoplasmic portion of the chain corresponds to 953 to 990 (YRQRHYRASLGLPESMRAKVFPDFHHSHFDRSLKNAIQ). A helical transmembrane segment spans residues 991-1011 (FLIDYGFYKFGLEITMIAIGI). Residue Asp1012 is a topological domain, extracellular. Residues 1013–1033 (IFNRMDALAAIQCFWLVLFAL) form a helical membrane-spanning segment. Over 1034 to 1041 (NKRVFVRR) the chain is Cytoplasmic. Residues 1042–1062 (IWVFYVIYMAILYPLQFFSYV) traverse the membrane as a helical segment. At 1063-1096 (GLPPDSCIEYPWSYWIPSYSDDARFNLSYLLNLS) the chain is on the extracellular side. N-linked (GlcNAc...) asparagine glycans are attached at residues Asn1088 and Asn1094. A helical membrane pass occupies residues 1097–1117 (IYGVNWPSAYLIGDFFVLLLA). The Cytoplasmic segment spans residues 1118–1160 (SCQLAVFRREGEDNDSIYNDGNFVIKPENPQYDFIDTKKSYVD). A helical transmembrane segment spans residues 1161-1181 (YFKSFVFHYGHWITLMSTLAA). The Extracellular segment spans residues 1182–1187 (GIAGTS). The helical transmembrane segment at 1188–1210 (LFALGYIIFTLTMLWSGNNLYVM) threads the bilayer. Residues 1211 to 1231 (NSTLRSFEHTLKRWNALLGYT) are Cytoplasmic-facing. A helical membrane pass occupies residues 1232-1252 (LFTITMKVCLQIFGCVFLSWF). The Extracellular portion of the chain corresponds to 1253–1299 (DQSGGWGKTLCIVRQLFSITCVNNECHVLKELEDFSKACAVETKEGN). A helical transmembrane segment spans residues 1300–1320 (IGFDVIALSFLVFQIRIFHSW). Residues 1321 to 1615 (YFQHCMVEYR…VVNCIGAHTD (295 aa)) lie on the Cytoplasmic side of the membrane. The interval 1463–1502 (DTIKDPDSRALIAVSEPEARKPGGTEETDGDEDEDNKDSK) is disordered. The span at 1488–1498 (EETDGDEDEDN) shows a compositional bias: acidic residues. A helical membrane pass occupies residues 1616 to 1636 (ILCYFFAIMTQVMTGGLITLP). The Extracellular segment spans residues 1637–1654 (LPLMSLFWGNLSNPRPSK). Asn1646 is a glycosylation site (N-linked (GlcNAc...) asparagine). Residues 1655–1675 (FFWVTMITYTECVIVIKFVCQ) form a helical membrane-spanning segment. Residues 1676 to 1706 (FAFMPYNSITWRTEHQMDPMSLDKLFGVSQR) are Cytoplasmic-facing. The helical transmembrane segment at 1707–1727 (DSFALWDIVLLFSLFFHRYML) threads the bilayer. The Extracellular portion of the chain corresponds to 1728 to 1833 (RKLGLWKDAN…KFRYIRDLYP (106 aa)). The N-linked (GlcNAc...) asparagine glycan is linked to Asn1737. The chain crosses the membrane as a helical span at residues 1834–1854 (IMFGIDVICFLIMTFGYSAFG). Residues 1855–1866 (EGGSGNVLDDVK) are Cytoplasmic-facing. A helical membrane pass occupies residues 1867-1887 (ASRIPVTLVVMLVGMTLAIII). Topologically, residues 1888–1900 (DRALYLRKSVVGK) are extracellular. The chain crosses the membrane as a helical span at residues 1901–1921 (LIYQVLMIAFLHIWVFLVLPN). Residues 1922-1930 (MTRRSAISN) lie on the Cytoplasmic side of the membrane. The helical transmembrane segment at 1931–1951 (HVAQALYVIKSCYFLVSAWQI) threads the bilayer. Topologically, residues 1952 to 2046 (RNGYPELCIG…KGKLVKYMMG (95 aa)) are extracellular. A helical membrane pass occupies residues 2047–2067 (FPIIIGVVIFIFSPLLLWSLL). Residues 2068–2346 (NQIGTISMPE…VGFIDRAFPS (279 aa)) lie on the Cytoplasmic side of the membrane. A helical transmembrane segment spans residues 2347-2367 (FLAKVFKGGVIAVYLSVILVV). At 2368–2442 (GRGLVRGIFT…WTRMSKKKQE (75 aa)) the chain is on the extracellular side.

This sequence belongs to the PIEZO (TC 1.A.75) family. In terms of tissue distribution, expressed in the pharyngeal-intestinal and spermathecal-uterine valves and in multiple reproductive tissues including the germline, somatic oviduct, and spermatheca. During reproduction, it is expressed in sheath cells, sperm, both spermathecal valves and the spermathecal bag cells.

Its subcellular location is the cell membrane. Pore-forming subunit of a mechanosensitive non-specific cation channel. Generates currents characterized by a linear current-voltage relationship. Plays a role in reproduction by positively regulating inter-tissue signaling to promote oocyte maturation, ovulation and fertilization, and sperm navigation from and to the spermatheca. May play a role in regulating cytosolic and endoplasmic reticulum calcium ion release. This chain is Piezo-type mechanosensitive ion channel component 1, found in Caenorhabditis elegans.